The chain runs to 332 residues: Transcription factor HBP-1b(c38) (332 aa).

The interval 1 to 48 is disordered; it reads MAEASPRTETSTDDTDENLMLEPGNAALAVVSDSSDRSRDKNGDQKTM. A compositionally biased stretch (basic and acidic residues) spans 34–47; the sequence is SSDRSRDKNGDQKT. Residues 44-107 form the bZIP domain; that stretch reads DQKTMRRLAQ…SSADQSHSMS (64 aa). Residues 46-66 form a basic motif region; that stretch reads KTMRRLAQNREAARKSRLRKK. Residues 47–142 are a coiled coil; the sequence is TMRRLAQNRE…RAAVNAHAGD (96 aa). Residues 72–86 are leucine-zipper; sequence LENSRLKLTQLEQEL. The 219-residue stretch at 111–329 folds into the DOG1 domain; the sequence is ALAFDTEYAR…RALSSLWLAR (219 aa).

It belongs to the bZIP family. Binds DNA as a dimer.

It localises to the nucleus. Its function is as follows. Transcriptional activator that binds specifically to the DNA sequence 5'-TGACG-3'. Recognizes ocs elements like the as-1 motif of the cauliflower mosaic virus 35S promoter. Binding to the as-1-like cis elements mediate auxin- and salicylic acid-inducible transcription. Binds to the hexamer motif 5'-ACGTCA-3' of histone gene promoters. This Triticum aestivum (Wheat) protein is Transcription factor HBP-1b(c38).